A 123-amino-acid polypeptide reads, in one-letter code: MTVIYQTTITRIGASAIDALSDQMLITFREGAPADLEEYCFIHCHGELKGALHPGLQFSLGQHRYPVTAVGSVAEDNLRELGHVTLRFDGLNEAEFPGTVHVAGPVPDDIAPGSVLKFESVKE.

The 114-residue stretch at 3–116 folds into the PTS EIIA type-5 domain; the sequence is VIYQTTITRI…PDDIAPGSVL (114 aa). Catalysis depends on His43, which acts as the Tele-phosphohistidine intermediate. Residue His43 is modified to Phosphohistidine; by HPr.

It localises to the cytoplasm. The phosphoenolpyruvate-dependent sugar phosphotransferase system (sugar PTS), a major carbohydrate active transport system, catalyzes the phosphorylation of incoming sugar substrates concomitantly with their translocation across the cell membrane. The enzyme II complex composed of SrlA, SrlB and SrlE is involved in glucitol/sorbitol transport. It can also use D-mannitol. This is PTS system glucitol/sorbitol-specific EIIA component (srlB) from Escherichia coli (strain K12).